Consider the following 906-residue polypeptide: Glutamate receptor 1 (906 aa).

An N-terminal signal peptide occupies residues 1-18 (MQHIFAFFCTGFLGAVVG). The Extracellular portion of the chain corresponds to 19–536 (ANFPNNIQIG…GVFSFLDPLA (518 aa)). Residues N63, N249, N257, N363, N401, and N406 are each glycosylated (N-linked (GlcNAc...) asparagine). The cysteines at positions 75 and 323 are disulfide-linked. 3 residues coordinate L-glutamate: P492, T494, and R499. The chain crosses the membrane as a helical span at residues 537–557 (YEIWMCIVFAYIGVSVVLFLV). Over 558–584 (SRFSPYEWHSEEFEEGRDQTTSDQSNE) the chain is Cytoplasmic. An intramembrane region (helical; Pore-forming) is located at residues 585-600 (FGIFNSLWFSLGAFMQ). An intramembrane segment occupies 601–603 (QGC). Residue C603 is the site of S-palmitoyl cysteine attachment. Residues 604 to 609 (DISPRS) lie on the Cytoplasmic side of the membrane. Residues 610 to 630 (LSGRIVGGVWWFFTLIIISSY) traverse the membrane as a helical segment. Over 631–805 (TANLAAFLTV…DKTSALSLSN (175 aa)) the chain is Extracellular. Residue S645 is modified to Phosphoserine. Residues S668 and T669 each contribute to the L-glutamate site. S710 carries the post-translational modification Phosphoserine. E719 is an L-glutamate binding site. C732 and C787 are oxidised to a cystine. The chain crosses the membrane as a helical span at residues 806 to 826 (VAGVFYILIGGLGLAMLVALI). The Cytoplasmic portion of the chain corresponds to 827-906 (EFCYKSRSES…SGMPLGATGL (80 aa)). The S-palmitoyl cysteine moiety is linked to residue C829. 2 positions are modified to phosphoserine: S849 and S863. Residues 861–880 (RNSGAGASSGGSGENGRVVS) are disordered. The PDZ-binding motif lies at 903–906 (ATGL).

Belongs to the glutamate-gated ion channel (TC 1.A.10.1) family. GRIA1 subfamily. Homotetramer or heterotetramer of pore-forming glutamate receptor subunits; heteromeric assembly can be the result of both receptor subtype and flip or flop form and according the composition, one partner can be dominant with respect to the fast desensitizing current component, whereas the other can determine the steady-state component. Tetramers may be formed by the dimerization of dimers. Found in a complex with GRIA2, GRIA3, GRIA4, CNIH2, CNIH3, CACNG2, CACNG3, CACNG4, CACNG5, CACNG7 and CACNG8. Interacts with HIP1 and RASGRF2. Interacts with SYNDIG1 and GRIA2. Interacts with DLG1 (via C-terminus). Interacts with LRFN1. Interacts with PRKG2. Interacts with CNIH2 and CACNG2. Interacts with CACNG5; this interaction modulates the gating. Interacts (via C-terminus) with PDLIM4 (via LIM domain); this interaction as well as the interaction of PDLIM4 with alpha-actinin is required for their colocalization in early endosomes. Interacts with SNX27 (via PDZ domain); the interaction is required for recycling to the plasma membrane when endocytosed and prevent degradation in lysosomes. Interacts (via PDZ-binding motif) with SHANK3 (via PDZ domain). Interacts with CACNG3; associates GRIA1 with the adapter protein complex 4 (AP-4) to target GRIA1 to the somatodendritic compartment of neurons. Interacts with CACNG2; this interaction mediates traffick to the plasma membrane and modulation of desensitization. Interacts with CNIH2 and CNIH3; this interaction promotes expression at the plasma membrane and extensively modulates their gating properties by slowing deactivation and desensitization kinetics. Found in a complex with GRIA2, GRIA3, GRIA4, DLG4, CACNG8 and CNIH2. In terms of processing, palmitoylated. Depalmitoylated by CPT1C and upon L-glutamate stimulation. ZDHHC3/GODZ specifically palmitoylates Cys-603, which leads to Golgi retention and decreased cell surface expression. In contrast, Cys-829 palmitoylation does not affect cell surface expression but regulates stimulation-dependent endocytosis. Post-translationally, phosphorylated at Ser-645. Phosphorylated at Ser-710 by PKC. Phosphorylated at Ser-849 by PKC, PKA and CAMK2. Phosphorylated at Ser-863 by PKC, PKA and PRKG2. Phosphorylation of Ser-863 is reduced by induction of long-term depression and increased by induction of long-term potentiation. In terms of tissue distribution, widely expressed in brain.

Its subcellular location is the cell membrane. It is found in the endoplasmic reticulum membrane. The protein resides in the postsynaptic cell membrane. The protein localises to the postsynaptic density membrane. It localises to the cell projection. Its subcellular location is the dendrite. It is found in the dendritic spine. The protein resides in the early endosome membrane. The protein localises to the recycling endosome membrane. It localises to the presynapse. Its subcellular location is the synapse. The enzyme catalyses Ca(2+)(in) = Ca(2+)(out). It catalyses the reaction Na(+)(in) = Na(+)(out). It carries out the reaction Mg(2+)(in) = Mg(2+)(out). The catalysed reaction is Li(+)(in) = Li(+)(out). The enzyme catalyses K(+)(in) = K(+)(out). It catalyses the reaction Sr(2+)(in) = Sr(2+)(out). Functionally, ionotropic glutamate receptor that functions as a ligand-gated cation channel, gated by L-glutamate and glutamatergic agonists such as alpha-amino-3-hydroxy-5-methyl-4-isoxazolepropionic acid (AMPA), quisqualic acid, and kainic acid. L-glutamate acts as an excitatory neurotransmitter at many synapses in the central nervous system. Binding of the excitatory neurotransmitter L-glutamate induces a conformation change, leading to the opening of the cation channel, and thereby converts the chemical signal to an electrical impulse upon entry of monovalent and divalent cations such as sodium and calcium. The receptor then desensitizes rapidly and enters in a transient inactive state, characterized by the presence of bound agonist. In the presence of CACNG2 or CACNG4 or CACNG7 or CACNG8, shows resensitization which is characterized by a delayed accumulation of current flux upon continued application of L-glutamate. Resensitization is blocked by CNIH2 through interaction with CACNG8 in the CACNG8-containing AMPA receptors complex. Calcium (Ca(2+)) permeability depends on subunits composition and, heteromeric channels containing edited GRIA2 subunit are calcium-impermeable. Also permeable to other divalents cations such as strontium(2+) and magnesium(2+) and monovalent cations such as potassium(1+) and lithium(1+). The protein is Glutamate receptor 1 of Homo sapiens (Human).